Consider the following 367-residue polypeptide: Heme A synthase 2 (367 aa).

The next 5 membrane-spanning stretches (helical) occupy residues 28–48 (MVAI…GIGA), 114–134 (MWGR…LWTG), 143–163 (WLVT…WMVA), 180–200 (VHYC…LTVL), and 221–241 (MAMG…FLSG). A heme-binding site is contributed by H284. 3 consecutive transmembrane segments (helical) span residues 286-306 (LLGT…IRAD), 314-334 (AFLV…TTLV), and 340-360 (IGIV…WAWF). H344 contributes to the heme binding site.

It belongs to the COX15/CtaA family. Type 2 subfamily. Interacts with CtaB. The cofactor is heme b.

The protein resides in the cell membrane. The enzyme catalyses Fe(II)-heme o + 2 A + H2O = Fe(II)-heme a + 2 AH2. It participates in porphyrin-containing compound metabolism; heme A biosynthesis; heme A from heme O: step 1/1. In terms of biological role, catalyzes the conversion of heme O to heme A by two successive hydroxylations of the methyl group at C8. The first hydroxylation forms heme I, the second hydroxylation results in an unstable dihydroxymethyl group, which spontaneously dehydrates, resulting in the formyl group of heme A. In Acidiphilium cryptum (strain JF-5), this protein is Heme A synthase 2.